The following is an 88-amino-acid chain: Small ribosomal subunit protein bS20 (88 aa).

The interval 1-27 (MANTASAKKMTRKIAKRTAINRSRRSR) is disordered.

The protein belongs to the bacterial ribosomal protein bS20 family.

Binds directly to 16S ribosomal RNA. This chain is Small ribosomal subunit protein bS20, found in Methylobacterium radiotolerans (strain ATCC 27329 / DSM 1819 / JCM 2831 / NBRC 15690 / NCIMB 10815 / 0-1).